Here is a 293-residue protein sequence, read N- to C-terminus: Ribosomal protein L11 methyltransferase (293 aa).

The S-adenosyl-L-methionine site is built by Thr-145, Gly-166, Asp-188, and Asn-230.

This sequence belongs to the methyltransferase superfamily. PrmA family.

The protein localises to the cytoplasm. It carries out the reaction L-lysyl-[protein] + 3 S-adenosyl-L-methionine = N(6),N(6),N(6)-trimethyl-L-lysyl-[protein] + 3 S-adenosyl-L-homocysteine + 3 H(+). Methylates ribosomal protein L11. The chain is Ribosomal protein L11 methyltransferase from Shewanella pealeana (strain ATCC 700345 / ANG-SQ1).